Here is a 442-residue protein sequence, read N- to C-terminus: MVTRETKLTSEREVESSMAQARHNGGGGGENHPFTSLGRQSSIYSLTLDEFQHALCENGKNFGSMNMDEFLVSIWNAEENNNNQQQAAAAAGSHSVPANHNGFNNNNNNGGEGGVGVFSGGSRGNEDANNKRGIANESSLPRQGSLTLPAPLCRKTVDEVWSEIHRGGGSGNGGDSNGRSSSSNGQNNAQNGGETAARQPTFGEMTLEDFLVKAGVVREHPTNPKPNPNPNQNQNPSSVIPAAAQQQLYGVFQGTGDPSFPGQAMGVGDPSGYAKRTGGGGYQQAPPVQAGVCYGGGVGFGAGGQQMGMVGPLSPVSSDGLGHGQVDNIGGQYGVDMGGLRGRKRVVDGPVEKVVERRQRRMIKNRESAARSRARKQAYTVELEAELNQLKEENAQLKHALAELERKRKQQYFESLKSRAQPKLPKSNGRLRTLMRNPSCPL.

Positions methionine 1–glutamate 15 are enriched in basic and acidic residues. Residues methionine 1 to leucine 37 are disordered. Phosphoserine occurs at positions 42 and 64. 3 disordered regions span residues asparagine 83 to proline 151, isoleucine 164 to threonine 201, and arginine 218 to serine 238. Residues asparagine 99–asparagine 109 are compositionally biased toward low complexity. Residues glycine 110–arginine 123 are compositionally biased toward gly residues. The segment covering asparagine 136–leucine 146 has biased composition (polar residues). At serine 145 the chain carries Phosphoserine. Residues glycine 167 to serine 176 are compositionally biased toward gly residues. Positions asparagine 177–glycine 193 are enriched in low complexity. At threonine 201 the chain carries Phosphothreonine. The region spanning valine 355–serine 418 is the bZIP domain. The tract at residues arginine 357–lysine 376 is basic motif. A leucine-zipper region spans residues leucine 383 to leucine 404. Residue lysine 391 forms a Glycyl lysine isopeptide (Lys-Gly) (interchain with G-Cter in SUMO) linkage. Positions glutamate 414–leucine 442 are disordered.

Belongs to the bZIP family. ABI5 subfamily. As to quaternary structure, DNA-binding homodimer. DNA-binding heterodimer with AREB3/DPBF3 or EEL/DPBF4. Interacts with ABI3, KEG, the mediator subunit MED25, and the AFP proteins AFP1, AFP2, AFP3 and AFP4. Interacts with TAP46. Interacts with the 36 kDa catalytic subunit (subunit C) of PP2A. Interacts with FYPP1 and FYPP3. Interacts with FREE1 (via C-terminus). In terms of processing, phosphorylated by SRK2D and SRK2I in vitro. Ubiquitinated. AFP1, KEG and RPN10 mediate its proteasome-dependent degradation. Its stability or degradation plays a central role in abscisic acid response. Sumoylated at Lys-391 by SIZ1. Sumoylation protects ABI5 from proteasome degradation, attenuating ABA signaling and sensitivity to ABA. In terms of tissue distribution, predominantly expressed in seeds.

The protein localises to the nucleus. Functionally, participates in ABA-regulated gene expression during seed development and subsequent vegetative stage by acting as the major mediator of ABA repression of growth. Binds to the embryo specification element and the ABA-responsive element (ABRE) of the Dc3 gene promoter and to the ABRE of the Em1 and Em6 genes promoters. Can also trans-activate its own promoter, suggesting that it is autoregulated. Plays a role in sugar-mediated senescence. In Arabidopsis thaliana (Mouse-ear cress), this protein is Protein ABSCISIC ACID-INSENSITIVE 5 (ABI5).